The primary structure comprises 338 residues: 1-aminocyclopropane-1-carboxylate deaminase (338 aa).

Lysine 51 is modified (N6-(pyridoxal phosphate)lysine). Catalysis depends on serine 78, which acts as the Nucleophile.

This sequence belongs to the ACC deaminase/D-cysteine desulfhydrase family. In terms of assembly, homotrimer. Pyridoxal 5'-phosphate is required as a cofactor.

The enzyme catalyses 1-aminocyclopropane-1-carboxylate + H2O = 2-oxobutanoate + NH4(+). Functionally, catalyzes a cyclopropane ring-opening reaction, the irreversible conversion of 1-aminocyclopropane-1-carboxylate (ACC) to ammonia and alpha-ketobutyrate. Allows growth on ACC as a nitrogen source. The chain is 1-aminocyclopropane-1-carboxylate deaminase from Burkholderia orbicola (strain MC0-3).